We begin with the raw amino-acid sequence, 535 residues long: CTP synthase (535 aa).

The tract at residues 1 to 267 is amidoligase domain; the sequence is MTKYIFVTGG…DKLVCEHMKL (267 aa). Residue Ser-13 coordinates CTP. Residue Ser-13 coordinates UTP. Position 14-19 (14-19) interacts with ATP; that stretch reads SLGKGI. Tyr-54 is a binding site for L-glutamine. Asp-71 serves as a coordination point for ATP. 2 residues coordinate Mg(2+): Asp-71 and Glu-141. Residues 148 to 150, 188 to 193, and Lys-224 each bind CTP; these read DIE and KTKPTQ. UTP is bound by residues 188–193 and Lys-224; that span reads KTKPTQ. Residues 292–534 form the Glutamine amidotransferase type-1 domain; the sequence is TIGLVGKYVE…VGASLQASES (243 aa). Gly-354 contributes to the L-glutamine binding site. Cys-381 functions as the Nucleophile; for glutamine hydrolysis in the catalytic mechanism. Residues 382–385, Glu-405, and Arg-462 contribute to the L-glutamine site; that span reads LGMQ. Residues His-507 and Glu-509 contribute to the active site.

Belongs to the CTP synthase family. In terms of assembly, homotetramer.

The enzyme catalyses UTP + L-glutamine + ATP + H2O = CTP + L-glutamate + ADP + phosphate + 2 H(+). It catalyses the reaction L-glutamine + H2O = L-glutamate + NH4(+). It carries out the reaction UTP + NH4(+) + ATP = CTP + ADP + phosphate + 2 H(+). It participates in pyrimidine metabolism; CTP biosynthesis via de novo pathway; CTP from UDP: step 2/2. With respect to regulation, allosterically activated by GTP, when glutamine is the substrate; GTP has no effect on the reaction when ammonia is the substrate. The allosteric effector GTP functions by stabilizing the protein conformation that binds the tetrahedral intermediate(s) formed during glutamine hydrolysis. Inhibited by the product CTP, via allosteric rather than competitive inhibition. Catalyzes the ATP-dependent amination of UTP to CTP with either L-glutamine or ammonia as the source of nitrogen. Regulates intracellular CTP levels through interactions with the four ribonucleotide triphosphates. In Bacillus pumilus (strain SAFR-032), this protein is CTP synthase.